Reading from the N-terminus, the 258-residue chain is Imidazole glycerol phosphate synthase subunit HisF (258 aa).

Residues D11 and D130 contribute to the active site.

The protein belongs to the HisA/HisF family. In terms of assembly, heterodimer of HisH and HisF.

The protein resides in the cytoplasm. The catalysed reaction is 5-[(5-phospho-1-deoxy-D-ribulos-1-ylimino)methylamino]-1-(5-phospho-beta-D-ribosyl)imidazole-4-carboxamide + L-glutamine = D-erythro-1-(imidazol-4-yl)glycerol 3-phosphate + 5-amino-1-(5-phospho-beta-D-ribosyl)imidazole-4-carboxamide + L-glutamate + H(+). Its pathway is amino-acid biosynthesis; L-histidine biosynthesis; L-histidine from 5-phospho-alpha-D-ribose 1-diphosphate: step 5/9. Functionally, IGPS catalyzes the conversion of PRFAR and glutamine to IGP, AICAR and glutamate. The HisF subunit catalyzes the cyclization activity that produces IGP and AICAR from PRFAR using the ammonia provided by the HisH subunit. The protein is Imidazole glycerol phosphate synthase subunit HisF of Bradyrhizobium sp. (strain BTAi1 / ATCC BAA-1182).